The following is a 291-amino-acid chain: Acetyl-coenzyme A carboxylase carboxyl transferase subunit beta (291 aa).

Residues 34 to 291 enclose the CoA carboxyltransferase N-terminal domain; the sequence is MWTKCSNCNS…LILHGVNKYE (258 aa). Residues cysteine 38, cysteine 41, cysteine 57, and cysteine 60 each contribute to the Zn(2+) site. The C4-type zinc finger occupies 38 to 60; sequence CSNCNSMIYYEDLENNKYVCTKC.

It belongs to the AccD/PCCB family. Acetyl-CoA carboxylase is a heterohexamer composed of biotin carboxyl carrier protein (AccB), biotin carboxylase (AccC) and two subunits each of ACCase subunit alpha (AccA) and ACCase subunit beta (AccD). The cofactor is Zn(2+).

The protein resides in the cytoplasm. The catalysed reaction is N(6)-carboxybiotinyl-L-lysyl-[protein] + acetyl-CoA = N(6)-biotinyl-L-lysyl-[protein] + malonyl-CoA. It functions in the pathway lipid metabolism; malonyl-CoA biosynthesis; malonyl-CoA from acetyl-CoA: step 1/1. Its function is as follows. Component of the acetyl coenzyme A carboxylase (ACC) complex. Biotin carboxylase (BC) catalyzes the carboxylation of biotin on its carrier protein (BCCP) and then the CO(2) group is transferred by the transcarboxylase to acetyl-CoA to form malonyl-CoA. The polypeptide is Acetyl-coenzyme A carboxylase carboxyl transferase subunit beta (Clostridium botulinum (strain Alaska E43 / Type E3)).